Here is a 76-residue protein sequence, read N- to C-terminus: DNA-directed RNA polymerase subunit omega (76 aa).

The protein belongs to the RNA polymerase subunit omega family. In terms of assembly, the RNAP catalytic core consists of 2 alpha, 1 beta, 1 beta' and 1 omega subunit. When a sigma factor is associated with the core the holoenzyme is formed, which can initiate transcription.

It catalyses the reaction RNA(n) + a ribonucleoside 5'-triphosphate = RNA(n+1) + diphosphate. Functionally, promotes RNA polymerase assembly. Latches the N- and C-terminal regions of the beta' subunit thereby facilitating its interaction with the beta and alpha subunits. The polypeptide is DNA-directed RNA polymerase subunit omega (rpoZ) (Aquifex aeolicus (strain VF5)).